Reading from the N-terminus, the 78-residue chain is Large ribosomal subunit protein bL28 (78 aa).

A disordered region spans residues 1-25 (MSRVCQVTGKRPAVGNNRSHAKNAT).

Belongs to the bacterial ribosomal protein bL28 family.

This Aliivibrio fischeri (strain ATCC 700601 / ES114) (Vibrio fischeri) protein is Large ribosomal subunit protein bL28.